The primary structure comprises 166 residues: Thioredoxin, mitochondrial (166 aa).

Residues 1–59 (MAQRLLLRRFLTSIISGKPSQSRWAPVASRALQTPQYSPGYLTVTPSQARSIYTTRVCS) constitute a mitochondrion transit peptide. Positions 61–166 (TFNIQDGPDF…LEAFLKKLIG (106 aa)) constitute a Thioredoxin domain. Catalysis depends on nucleophile residues Cys90 and Cys93. Residues Cys90 and Cys93 are joined by a disulfide bond. Position 152 is an N6-acetyllysine; alternate (Lys152). Lys152 carries the post-translational modification N6-succinyllysine; alternate.

The protein belongs to the thioredoxin family. As to quaternary structure, monomer.

Its subcellular location is the mitochondrion. Functionally, important for the control of mitochondrial reactive oxygen species homeostasis, apoptosis regulation and cell viability. Is involved in various redox reactions including the reduction of protein disulfide bonds, through the reversible oxidation of its active center dithiol to a disulfide. The polypeptide is Thioredoxin, mitochondrial (TXN2) (Bos taurus (Bovine)).